The chain runs to 312 residues: MKLLNQSQVSEFILLGLTSSQDVEFLLFALFSVIYVVTVLGNLLIIVTVFNTPNLNTPMYFLLGNLSFVDMTLASFATPKVILNLLKKQKVISFAGCFTQIFLLHLLGGVEMVLLVSMAFDRYVAICKPLHYMTIMNKKVCVLLVVTSWLLGLLHSGFQIPFAVNLPFCGPNVVDSIFCDLPLVTKLACIDIYFVQVVIVANSGIISLSCFIILLISYSLILITIKNHSPTGQSKARSTLTAHITVVILFFGPCIFIYIWPFGNHSVDKFLAVFYTIITPILNPIIYTLRNKEMKISMKKLWRAFVNSREDT.

Topologically, residues 1 to 25 are extracellular; sequence MKLLNQSQVSEFILLGLTSSQDVEF. Asparagine 5 carries N-linked (GlcNAc...) asparagine glycosylation. The helical transmembrane segment at 26-49 threads the bilayer; sequence LLFALFSVIYVVTVLGNLLIIVTV. Residues 50 to 57 are Cytoplasmic-facing; that stretch reads FNTPNLNT. A helical transmembrane segment spans residues 58–79; it reads PMYFLLGNLSFVDMTLASFATP. Topologically, residues 80-100 are extracellular; it reads KVILNLLKKQKVISFAGCFTQ. The cysteines at positions 97 and 189 are disulfide-linked. The chain crosses the membrane as a helical span at residues 101–120; sequence IFLLHLLGGVEMVLLVSMAF. Residues 121-139 lie on the Cytoplasmic side of the membrane; sequence DRYVAICKPLHYMTIMNKK. Residues 140–158 traverse the membrane as a helical segment; it reads VCVLLVVTSWLLGLLHSGF. Over 159–195 the chain is Extracellular; sequence QIPFAVNLPFCGPNVVDSIFCDLPLVTKLACIDIYFV. A helical membrane pass occupies residues 196-219; sequence QVVIVANSGIISLSCFIILLISYS. Over 220–235 the chain is Cytoplasmic; sequence LILITIKNHSPTGQSK. A helical membrane pass occupies residues 236-258; sequence ARSTLTAHITVVILFFGPCIFIY. Over 259-269 the chain is Extracellular; it reads IWPFGNHSVDK. N-linked (GlcNAc...) asparagine glycosylation is present at asparagine 264. Residues 270–289 form a helical membrane-spanning segment; the sequence is FLAVFYTIITPILNPIIYTL. Topologically, residues 290-312 are cytoplasmic; the sequence is RNKEMKISMKKLWRAFVNSREDT.

It belongs to the G-protein coupled receptor 1 family.

The protein localises to the cell membrane. In terms of biological role, odorant receptor. This is Olfactory receptor 4K17 (OR4K17) from Homo sapiens (Human).